Here is a 310-residue protein sequence, read N- to C-terminus: Beta-ketoacyl-[acyl-carrier-protein] synthase III (310 aa).

Catalysis depends on residues C112 and H235. An ACP-binding region spans residues 236–240; sequence QANIR. N265 is a catalytic residue.

It belongs to the thiolase-like superfamily. FabH family. As to quaternary structure, homodimer.

The protein localises to the cytoplasm. It catalyses the reaction malonyl-[ACP] + acetyl-CoA + H(+) = 3-oxobutanoyl-[ACP] + CO2 + CoA. The protein operates within lipid metabolism; fatty acid biosynthesis. Functionally, catalyzes the condensation reaction of fatty acid synthesis by the addition to an acyl acceptor of two carbons from malonyl-ACP. Catalyzes the first condensation reaction which initiates fatty acid synthesis and may therefore play a role in governing the total rate of fatty acid production. Possesses both acetoacetyl-ACP synthase and acetyl transacylase activities. Its substrate specificity determines the biosynthesis of branched-chain and/or straight-chain of fatty acids. The chain is Beta-ketoacyl-[acyl-carrier-protein] synthase III from Geobacillus kaustophilus (strain HTA426).